A 359-amino-acid chain; its full sequence is MKTLTVHTPSHSYPIFIGNGLLPQAGSLLKPHLGKRAAIIANETVAPLYLGTLQTALDAAGVSHFSIILPDGEAHKNWQTLNLIFDGLMQNRAERKTTLIALGGGVIGDMVGFAAATYQRGAPFVQIPTTLLSQVDSSVGGKTAINHPLGKNMIGAFYQPQAVLADLDTLHTLPARELSAGMAEVIKYGALGDIGFFEWLEQHMPELMTLDREKLAQAVYRCCQMKADIVAQDETEQGIRAWLNLGHTFGHAIETEMGYGTWLHGEAIAAGCVLAARLSEQLGKTSAADTARLAALLEAAGLPSAPPVFAFEKWLEHMSHDKKVSGGIMRFIGLNRLGEANITEITDTDILRRTLQPYL.

NAD(+)-binding positions include 71 to 76 (DGEAHK), 105 to 109 (GVIGD), 129 to 130 (TT), Lys142, Lys151, and 169 to 172 (TLHT). Zn(2+)-binding residues include Glu184, His247, and His264.

This sequence belongs to the sugar phosphate cyclases superfamily. Dehydroquinate synthase family. It depends on NAD(+) as a cofactor. The cofactor is Co(2+). Requires Zn(2+) as cofactor.

It localises to the cytoplasm. The enzyme catalyses 7-phospho-2-dehydro-3-deoxy-D-arabino-heptonate = 3-dehydroquinate + phosphate. Its pathway is metabolic intermediate biosynthesis; chorismate biosynthesis; chorismate from D-erythrose 4-phosphate and phosphoenolpyruvate: step 2/7. In terms of biological role, catalyzes the conversion of 3-deoxy-D-arabino-heptulosonate 7-phosphate (DAHP) to dehydroquinate (DHQ). The polypeptide is 3-dehydroquinate synthase (Neisseria meningitidis serogroup B (strain ATCC BAA-335 / MC58)).